Reading from the N-terminus, the 162-residue chain is Caveolin-2 (162 aa).

Topologically, residues 1-86 (MGLETEKADV…FEISKYVMYK (86 aa)) are cytoplasmic. Y19 is subject to Phosphotyrosine; by SRC. Residues S20 and S23 each carry the phosphoserine modification. A Phosphotyrosine; by SRC modification is found at Y27. S36 carries the phosphoserine modification. Positions 87–107 (FLTVFLAIPLAFLAGILFATL) form an intramembrane region, helical. Residues 108–162 (SCLHIWIIMPFVKTCLMVLPSVQTIWKSVTDAIIAPLCTSIGRSFSSVSLQLSQD) are Cytoplasmic-facing.

This sequence belongs to the caveolin family. In terms of assembly, monomer or homodimer. Interacts with CAV1; the interaction forms a stable heterooligomeric complex that is required for targeting to lipid rafts and for caveolae formation. Tyrosine phosphorylated forms do not form heterooligomers with the Tyr-19-phosphorylated form existing as a monomer or dimer, and the Tyr-27-form as a monomer only. Interacts (tyrosine phosphorylated form) with the SH2 domain-containing proteins, RASA1, NCK1 and SRC. Interacts (tyrosine phosphorylated form) with INSR, the interaction (Tyr-27-phosphorylated form) is increased on insulin stimulation. Interacts (Tyr-19 phosphorylated form) with MAPK1 (phosphorylated form); the interaction, promoted by insulin, leads to nuclear location and MAPK1 activation. Interacts with STAT3; the interaction is increased on insulin-induced tyrosine phosphorylation leading to STAT activation. Post-translationally, phosphorylated on serine and tyrosine residues. CAV1 promotes phosphorylation on Ser-23 which then targets the complex to the plasma membrane, lipid rafts and caveolae. Phosphorylation on Ser-36 appears to modulate mitosis in endothelial cells. Phosphorylation on both Tyr-19 and Tyr-27 is required for insulin-induced 'Ser-727' phosphorylation of STAT3 and its activation. Phosphorylation on Tyr-19 is required for insulin-induced phosphorylation of MAPK1 and DNA binding of STAT3. Tyrosine phosphorylation is induced by both EGF and insulin (By. similarity).

The protein resides in the nucleus. The protein localises to the cytoplasm. Its subcellular location is the golgi apparatus membrane. It is found in the cell membrane. It localises to the membrane. The protein resides in the caveola. May act as a scaffolding protein within caveolar membranes. Interacts directly with G-protein alpha subunits and can functionally regulate their activity. Acts as an accessory protein in conjunction with CAV1 in targeting to lipid rafts and driving caveolae formation. The Ser-36 phosphorylated form has a role in modulating mitosis in endothelial cells. Positive regulator of cellular mitogenesis of the MAPK signaling pathway. Required for the insulin-stimulated nuclear translocation and activation of MAPK1 and STAT3, and the subsequent regulation of cell cycle progression. The chain is Caveolin-2 (CAV2) from Plecturocebus moloch (Dusky titi monkey).